Here is a 114-residue protein sequence, read N- to C-terminus: uncharacterized protein (114 aa).

Positions 6–114 constitute an HIT domain; it reads IFSKIIRREI…GGRPFSWPPG (109 aa). Residues 98-102 carry the Histidine triad motif motif; it reads HLHLH.

This is an uncharacterized protein from Synechocystis sp. (strain ATCC 27184 / PCC 6803 / Kazusa).